The following is a 241-amino-acid chain: ATP synthase subunit a (241 aa).

7 helical membrane-spanning segments follow: residues 29-49 (NSSL…LLGV), 86-106 (IPLV…GMLP), 114-134 (HVIV…IVGF), 144-164 (ILLP…IKLF), 177-197 (LAAN…FIMN), 200-220 (LILT…EVFV), and 221-241 (AILQ…DAVK).

It belongs to the ATPase A chain family. F-type ATPases have 2 components, CF(1) - the catalytic core - and CF(0) - the membrane proton channel. CF(1) has five subunits: alpha(3), beta(3), gamma(1), delta(1), epsilon(1). CF(0) has three main subunits: a(1), b(2) and c(9-12). The alpha and beta chains form an alternating ring which encloses part of the gamma chain. CF(1) is attached to CF(0) by a central stalk formed by the gamma and epsilon chains, while a peripheral stalk is formed by the delta and b chains.

It is found in the cell membrane. In terms of biological role, key component of the proton channel; it plays a direct role in the translocation of protons across the membrane. The sequence is that of ATP synthase subunit a from Wolbachia sp. subsp. Brugia malayi (strain TRS).